The primary structure comprises 359 residues: Phosphate acyltransferase (359 aa).

Belongs to the PlsX family. In terms of assembly, homodimer. Probably interacts with PlsY.

The protein resides in the cytoplasm. The catalysed reaction is a fatty acyl-[ACP] + phosphate = an acyl phosphate + holo-[ACP]. It functions in the pathway lipid metabolism; phospholipid metabolism. In terms of biological role, catalyzes the reversible formation of acyl-phosphate (acyl-PO(4)) from acyl-[acyl-carrier-protein] (acyl-ACP). This enzyme utilizes acyl-ACP as fatty acyl donor, but not acyl-CoA. The chain is Phosphate acyltransferase from Salmonella agona (strain SL483).